The following is a 152-amino-acid chain: SsrA-binding protein (152 aa).

The protein belongs to the SmpB family.

The protein localises to the cytoplasm. Its function is as follows. Required for rescue of stalled ribosomes mediated by trans-translation. Binds to transfer-messenger RNA (tmRNA), required for stable association of tmRNA with ribosomes. tmRNA and SmpB together mimic tRNA shape, replacing the anticodon stem-loop with SmpB. tmRNA is encoded by the ssrA gene; the 2 termini fold to resemble tRNA(Ala) and it encodes a 'tag peptide', a short internal open reading frame. During trans-translation Ala-aminoacylated tmRNA acts like a tRNA, entering the A-site of stalled ribosomes, displacing the stalled mRNA. The ribosome then switches to translate the ORF on the tmRNA; the nascent peptide is terminated with the 'tag peptide' encoded by the tmRNA and targeted for degradation. The ribosome is freed to recommence translation, which seems to be the essential function of trans-translation. This chain is SsrA-binding protein, found in Rickettsia prowazekii (strain Madrid E).